The following is a 515-amino-acid chain: Kelch repeat protein M-T8 (515 aa).

The BTB domain occupies 16-82 (CDVEIVAEGK…MYTESIELHK (67 aa)). 5 Kelch repeats span residues 280–326 (VLYF…AIGG), 328–374 (IYII…CYKN), 376–423 (IWVL…VYKE), 424–471 (RLYC…VYND), and 473–512 (LYVF…YATY).

This sequence belongs to the poxviruses Kelch family.

This chain is Kelch repeat protein M-T8, found in Oryctolagus cuniculus (Rabbit).